The chain runs to 574 residues: Proline--tRNA ligase (574 aa).

Belongs to the class-II aminoacyl-tRNA synthetase family. ProS type 1 subfamily. Homodimer.

The protein localises to the cytoplasm. It carries out the reaction tRNA(Pro) + L-proline + ATP = L-prolyl-tRNA(Pro) + AMP + diphosphate. In terms of biological role, catalyzes the attachment of proline to tRNA(Pro) in a two-step reaction: proline is first activated by ATP to form Pro-AMP and then transferred to the acceptor end of tRNA(Pro). As ProRS can inadvertently accommodate and process non-cognate amino acids such as alanine and cysteine, to avoid such errors it has two additional distinct editing activities against alanine. One activity is designated as 'pretransfer' editing and involves the tRNA(Pro)-independent hydrolysis of activated Ala-AMP. The other activity is designated 'posttransfer' editing and involves deacylation of mischarged Ala-tRNA(Pro). The misacylated Cys-tRNA(Pro) is not edited by ProRS. This chain is Proline--tRNA ligase, found in Aeromonas hydrophila subsp. hydrophila (strain ATCC 7966 / DSM 30187 / BCRC 13018 / CCUG 14551 / JCM 1027 / KCTC 2358 / NCIMB 9240 / NCTC 8049).